A 1358-amino-acid polypeptide reads, in one-letter code: Mediator of RNA polymerase II transcription subunit 12 (1358 aa).

Belongs to the Mediator complex subunit 12 family. Component of the SRB8-11 complex, which itself associates with the Mediator complex.

It localises to the nucleus. Component of the SRB8-11 complex. The SRB8-11 complex is a regulatory module of the Mediator complex which is itself involved in regulation of basal and activated RNA polymerase II-dependent transcription. The SRB8-11 complex may be involved in the transcriptional repression of a subset of genes regulated by Mediator. It may inhibit the association of the Mediator complex with RNA polymerase II to form the holoenzyme complex. This is Mediator of RNA polymerase II transcription subunit 12 (SRB8) from Candida glabrata (strain ATCC 2001 / BCRC 20586 / JCM 3761 / NBRC 0622 / NRRL Y-65 / CBS 138) (Yeast).